The chain runs to 157 residues: ATP synthase subunit b', chloroplastic (157 aa).

The helical transmembrane segment at Leu-26–Tyr-43 threads the bilayer.

Belongs to the ATPase B chain family. F-type ATPases have 2 components, F(1) - the catalytic core - and F(0) - the membrane proton channel. F(1) has five subunits: alpha(3), beta(3), gamma(1), delta(1), epsilon(1). F(0) has four main subunits: a(1), b(1), b'(1) and c(10-14). The alpha and beta chains form an alternating ring which encloses part of the gamma chain. F(1) is attached to F(0) by a central stalk formed by the gamma and epsilon chains, while a peripheral stalk is formed by the delta, b and b' chains.

It localises to the plastid. It is found in the chloroplast thylakoid membrane. In terms of biological role, f(1)F(0) ATP synthase produces ATP from ADP in the presence of a proton or sodium gradient. F-type ATPases consist of two structural domains, F(1) containing the extramembraneous catalytic core and F(0) containing the membrane proton channel, linked together by a central stalk and a peripheral stalk. During catalysis, ATP synthesis in the catalytic domain of F(1) is coupled via a rotary mechanism of the central stalk subunits to proton translocation. Functionally, component of the F(0) channel, it forms part of the peripheral stalk, linking F(1) to F(0). The b'-subunit is a diverged and duplicated form of b found in plants and photosynthetic bacteria. In Cyanidium caldarium (Red alga), this protein is ATP synthase subunit b', chloroplastic.